Consider the following 305-residue polypeptide: uncharacterized protein (305 aa).

The first 29 residues, 1–29 (MKKWFSSISKKKVSFSTLLLLGSGIVLSS), serve as a signal peptide directing secretion. Residue cysteine 30 is the site of N-palmitoyl cysteine attachment. Cysteine 30 carries S-diacylglycerol cysteine lipidation. A disordered region spans residues 234 to 265 (FYNPDNSNGSNAPGSNQPNQDSGNNGSTTPAA). Polar residues predominate over residues 237–258 (PDNSNGSNAPGSNQPNQDSGNN).

It localises to the cell membrane. This is an uncharacterized protein from Mycoplasma pneumoniae (strain ATCC 29342 / M129 / Subtype 1) (Mycoplasmoides pneumoniae).